The primary structure comprises 596 residues: Aspartate--tRNA(Asp/Asn) ligase (596 aa).

Glu-175 contributes to the L-aspartate binding site. Positions 199 to 202 (QQYK) are aspartate. L-aspartate contacts are provided by Arg-221 and His-454. ATP is bound at residue 221–223 (RDE). Glu-488 lines the ATP pocket. Position 495 (Arg-495) interacts with L-aspartate. 540 to 543 (GIDR) contacts ATP.

This sequence belongs to the class-II aminoacyl-tRNA synthetase family. Type 1 subfamily. In terms of assembly, homodimer.

It localises to the cytoplasm. It carries out the reaction tRNA(Asx) + L-aspartate + ATP = L-aspartyl-tRNA(Asx) + AMP + diphosphate. Aspartyl-tRNA synthetase with relaxed tRNA specificity since it is able to aspartylate not only its cognate tRNA(Asp) but also tRNA(Asn). Reaction proceeds in two steps: L-aspartate is first activated by ATP to form Asp-AMP and then transferred to the acceptor end of tRNA(Asp/Asn). This chain is Aspartate--tRNA(Asp/Asn) ligase, found in Mesorhizobium japonicum (strain LMG 29417 / CECT 9101 / MAFF 303099) (Mesorhizobium loti (strain MAFF 303099)).